Consider the following 187-residue polypeptide: Ribonuclease HII (187 aa).

The RNase H type-2 domain maps to 1–187 (MIILGIDEAG…YKPVQVLLNE (187 aa)). A divalent metal cation-binding residues include D7, E8, and D99.

It belongs to the RNase HII family. Requires Mn(2+) as cofactor. It depends on Mg(2+) as a cofactor.

The protein localises to the cytoplasm. It catalyses the reaction Endonucleolytic cleavage to 5'-phosphomonoester.. Functionally, endonuclease that specifically degrades the RNA of RNA-DNA hybrids. This Francisella tularensis subsp. tularensis (strain FSC 198) protein is Ribonuclease HII.